Here is a 433-residue protein sequence, read N- to C-terminus: MRLTVIGGGLAGSEAAYQAAQQGVTVDLYEMRPVKTTAAHKTGELAELVCSNSLRAKSLENAAGLLKEELRKFDSLIMKVADQVQVPAGGALAVDREAFSQKVTEYIENHPNINLITEEVTEINESQPTVIATGPLTSTSLTERIQKLTGTDFLYFYDAAAPIVTYESINKNIAYWASRYGKGTPDYLNCPMTKEEYEDFYQELINAEKVPLKSFEKEVVFEGCMPVEQMANRGKDTLVFGPLKPVGLENPNTGEMPYAVVQLRKDNREGTLYNLVGFQTRLKWPEQRRVFRKIPGLEEAEFVRYGVMHRNTFINSPKVLTANYQLRERPGLFFAGQVTGVEGYVESTASGLVAGLNAARKLQGNETLTFPRETALGALASYIVEASPDNFQPMNINFGLLPSLEKKVPKKIKKQKQSERALKILEEFIERKL.

FAD is bound at residue 7–12 (GGGLAG).

The protein belongs to the MnmG family. TrmFO subfamily. FAD is required as a cofactor.

It is found in the cytoplasm. It carries out the reaction uridine(54) in tRNA + (6R)-5,10-methylene-5,6,7,8-tetrahydrofolate + NADH + H(+) = 5-methyluridine(54) in tRNA + (6S)-5,6,7,8-tetrahydrofolate + NAD(+). It catalyses the reaction uridine(54) in tRNA + (6R)-5,10-methylene-5,6,7,8-tetrahydrofolate + NADPH + H(+) = 5-methyluridine(54) in tRNA + (6S)-5,6,7,8-tetrahydrofolate + NADP(+). Its function is as follows. Catalyzes the folate-dependent formation of 5-methyl-uridine at position 54 (M-5-U54) in all tRNAs. The sequence is that of Methylenetetrahydrofolate--tRNA-(uracil-5-)-methyltransferase TrmFO from Natranaerobius thermophilus (strain ATCC BAA-1301 / DSM 18059 / JW/NM-WN-LF).